Here is a 152-residue protein sequence, read N- to C-terminus: MSEKYVVTWDMLQIHARKLASRLLPVEQWKGIIAVSRGGLVPGALLARELGIRHVDTVCISSYDHDNQRELKVLKRAEGDGEGFIVIDDLVDTGGTAVAIREMYPKAHFVTIFAKPAGRPLVDDYVVDIPQDTWIEQPWDMGVVFVPPIAGR.

Residues 37-38 (RG), Arg-69, and 88-96 (DDLVDTGGT) contribute to the 5-phospho-alpha-D-ribose 1-diphosphate site. Position 69 (Arg-69) interacts with GMP. Residue Asp-89 coordinates Mg(2+). Asp-92 and Ile-135 together coordinate guanine. The xanthine site is built by Asp-92 and Ile-135. Residues 92–96 (DTGGT) and 134–135 (WI) contribute to the GMP site.

It belongs to the purine/pyrimidine phosphoribosyltransferase family. XGPT subfamily. In terms of assembly, homotetramer. The cofactor is Mg(2+).

The protein resides in the cell inner membrane. The enzyme catalyses GMP + diphosphate = guanine + 5-phospho-alpha-D-ribose 1-diphosphate. It catalyses the reaction XMP + diphosphate = xanthine + 5-phospho-alpha-D-ribose 1-diphosphate. The catalysed reaction is IMP + diphosphate = hypoxanthine + 5-phospho-alpha-D-ribose 1-diphosphate. It participates in purine metabolism; GMP biosynthesis via salvage pathway; GMP from guanine: step 1/1. Its pathway is purine metabolism; XMP biosynthesis via salvage pathway; XMP from xanthine: step 1/1. Its function is as follows. Purine salvage pathway enzyme that catalyzes the transfer of the ribosyl-5-phosphate group from 5-phospho-alpha-D-ribose 1-diphosphate (PRPP) to the N9 position of the 6-oxopurines guanine and xanthine to form the corresponding ribonucleotides GMP (guanosine 5'-monophosphate) and XMP (xanthosine 5'-monophosphate), with the release of PPi. To a lesser extent, also acts on hypoxanthine. The sequence is that of Xanthine-guanine phosphoribosyltransferase from Klebsiella pneumoniae (strain 342).